Reading from the N-terminus, the 162-residue chain is EF-hand calcium-binding domain-containing protein 11 (162 aa).

3 consecutive EF-hand domains span residues 18–53 (SERR…LFGY), 91–126 (LYRN…VAPK), and 127–162 (LPAR…GQSK). Ca(2+) contacts are provided by D140, D142, D144, H146, and D151.

The protein is EF-hand calcium-binding domain-containing protein 11 (Efcab11) of Mus musculus (Mouse).